We begin with the raw amino-acid sequence, 146 residues long: Phospholipase A2 OS2 (146 aa).

An N-terminal signal peptide occupies residues 1 to 27 (MHPAHLLVLLAVCVSLLGASDIPPLPL). Intrachain disulfides connect C38–C99, C54–C145, C56–C72, C71–C126, C78–C119, C88–C112, and C106–C117. Y55, G57, and G59 together coordinate Ca(2+). H75 is an active-site residue. D76 provides a ligand contact to Ca(2+). Residue D120 is part of the active site.

It belongs to the phospholipase A2 family. Group I subfamily. D49 sub-subfamily. In terms of assembly, monomer. Ca(2+) serves as cofactor. Expressed by the venom gland.

The protein localises to the secreted. It carries out the reaction a 1,2-diacyl-sn-glycero-3-phosphocholine + H2O = a 1-acyl-sn-glycero-3-phosphocholine + a fatty acid + H(+). Its function is as follows. Snake venom phospholipase A2 (PLA2) that shows high presynaptic neurotoxicity in vertebrata that is independent of catalytic activity, as well as local myotoxicity when intramuscularly injected into mice. Blocks acetylcholine release in Aplysia neurons, and potentiates pro-inflammatory cellular signaling. Potentiates glutamate excitoxicity when coinjected into brain of rats. May act by binding in a calcium-dependent fashion and with high affinity to a neuronal-type (N-type) PLA2 receptor, and with very high affinity to a muscle-type (M-type) PLA2 receptor. In vitro, shows a high-specific activity on E.coli membranes and is more efficient on the anionic phospholipid POPG than on the anionic phospholipid POPS or the zwitterionic phospholipid POPC. Exerts catalytically-independent anti-HIV (IC(50) is 35 nM) activity and catalytically-dependent antimalarial activity (IC(50) is 3.1 nM when tested on P.falciparum grown in serum that contains lipoproteins). PLA2 catalyzes the calcium-dependent hydrolysis of the 2-acyl groups in 3-sn-phosphoglycerides. This chain is Phospholipase A2 OS2, found in Oxyuranus scutellatus scutellatus (Australian taipan).